The sequence spans 262 residues: Thiazole synthase (262 aa).

Lysine 96 functions as the Schiff-base intermediate with DXP in the catalytic mechanism. Residues glycine 157, 184-185 (AG), and 206-207 (NT) each bind 1-deoxy-D-xylulose 5-phosphate.

The protein belongs to the ThiG family. As to quaternary structure, homotetramer. Forms heterodimers with either ThiH or ThiS.

The protein resides in the cytoplasm. It carries out the reaction [ThiS sulfur-carrier protein]-C-terminal-Gly-aminoethanethioate + 2-iminoacetate + 1-deoxy-D-xylulose 5-phosphate = [ThiS sulfur-carrier protein]-C-terminal Gly-Gly + 2-[(2R,5Z)-2-carboxy-4-methylthiazol-5(2H)-ylidene]ethyl phosphate + 2 H2O + H(+). It functions in the pathway cofactor biosynthesis; thiamine diphosphate biosynthesis. In terms of biological role, catalyzes the rearrangement of 1-deoxy-D-xylulose 5-phosphate (DXP) to produce the thiazole phosphate moiety of thiamine. Sulfur is provided by the thiocarboxylate moiety of the carrier protein ThiS. In vitro, sulfur can be provided by H(2)S. The protein is Thiazole synthase of Legionella pneumophila (strain Corby).